The chain runs to 48 residues: Small polypeptide DEVIL 22 (48 aa).

A helical membrane pass occupies residues 7 to 23; sequence KLNKGHAFTSKCASLVK. Positions 13–44 are required for DVL/RTFL small polypeptide activity; that stretch reads AFTSKCASLVKEQRARLYILRRCATMLCCWYI.

It belongs to the DVL/RTFL small polypeptides family.

Its subcellular location is the cell membrane. Small polypeptide acting as a regulatory molecule which coordinates cellular responses required for differentiation, growth and development, probably by restricting polar cell proliferation in lateral organs and coordinating socket cell recruitment and differentiation at trichome sites. This is Small polypeptide DEVIL 22 from Arabidopsis thaliana (Mouse-ear cress).